The following is a 98-amino-acid chain: A-type ATP synthase subunit F (98 aa).

It belongs to the V-ATPase F subunit family. In terms of assembly, the A-type ATPase is composed of subunits A(3), B(3), C, D, E(1 or 2), F, H(2), I and K(x).

It is found in the cell membrane. In terms of biological role, component of the A-type ATP synthase that produces ATP from ADP in the presence of a proton gradient across the membrane. The chain is A-type ATP synthase subunit F from Methanocaldococcus jannaschii (strain ATCC 43067 / DSM 2661 / JAL-1 / JCM 10045 / NBRC 100440) (Methanococcus jannaschii).